The primary structure comprises 240 residues: Ubiquinone biosynthesis O-methyltransferase (240 aa).

Positions 44, 64, 85, and 129 each coordinate S-adenosyl-L-methionine.

Belongs to the methyltransferase superfamily. UbiG/COQ3 family.

It carries out the reaction a 3-demethylubiquinol + S-adenosyl-L-methionine = a ubiquinol + S-adenosyl-L-homocysteine + H(+). The enzyme catalyses a 3-(all-trans-polyprenyl)benzene-1,2-diol + S-adenosyl-L-methionine = a 2-methoxy-6-(all-trans-polyprenyl)phenol + S-adenosyl-L-homocysteine + H(+). The protein operates within cofactor biosynthesis; ubiquinone biosynthesis. O-methyltransferase that catalyzes the 2 O-methylation steps in the ubiquinone biosynthetic pathway. The chain is Ubiquinone biosynthesis O-methyltransferase from Escherichia coli O7:K1 (strain IAI39 / ExPEC).